Consider the following 258-residue polypeptide: Regulatory protein RecX (258 aa).

The protein belongs to the RecX family.

Its subcellular location is the cytoplasm. Functionally, modulates RecA activity. This Streptococcus pneumoniae (strain 70585) protein is Regulatory protein RecX.